Reading from the N-terminus, the 413-residue chain is Cardiolipin synthase B (413 aa).

PLD phosphodiesterase domains are found at residues 108–135 and 285–312; these read IFRR…SAEH and RRRP…DPLS. Residues His113, Lys115, Asp120, His290, Lys292, and Asp297 contribute to the active site. The interval 388 to 413 is disordered; it reads AQVPPPAQPEMETQDRVDPENSGVKP.

The protein belongs to the phospholipase D family. Cardiolipin synthase subfamily. ClsB sub-subfamily.

Its subcellular location is the cell membrane. It catalyses the reaction 2 a 1,2-diacyl-sn-glycero-3-phospho-(1'-sn-glycerol) = a cardiolipin + glycerol. Catalyzes the phosphatidyl group transfer from one phosphatidylglycerol molecule to another to form cardiolipin (CL) (diphosphatidylglycerol) and glycerol. This is Cardiolipin synthase B from Salmonella typhi.